Consider the following 524-residue polypeptide: MPSKNPADTVSIYVPGASINSQTASDSTQPAASAYHHKANHNQNRSIEQSAQQAAEQSLHTAETVAPKVGFVSLGCPKALVDSERIITELTRDGYRVASDYNGADLVVVNTCGFIESAVQESLDAIGEALNKNGKVIVTGCLGKDAQKIRDMHPAVLAVTGAHAYDEVITAVSTHAPMPQAIQDKKAYDPKIDLIDLAGVKLTPSHYAYLKISEGCNHRCTFCIIPSLRGDLLSRPIEQVMGEAMALKKAGVKEILVISQDTSAYGVDLKYKTSFWDGMPLKSKFFDMCQALAKVGIWVRLHYVYPYPHVDKVVELMAKPGDRGGLLPYLDIPLQHASPSVLKAMKRPAHSENTLARIQKWREINPDIVIRSTFVVGFPGETEEDFEYLLEWLKQAKLDRVGCFTYSEIEGAVANDLPNPVPEAIKQERYERFMAVQQQISEQKLQEKVGKTMTVLVDEIDTEEQIAICRSYADAPEIDGHVYVDNIVQNGMMMVKVGDMLTVTIDEASEYDLFASYDAVQALA.

Polar residues predominate over residues 20 to 31; the sequence is NSQTASDSTQPA. A disordered region spans residues 20–59; sequence NSQTASDSTQPAASAYHHKANHNQNRSIEQSAQQAAEQSL. Residues 48 to 58 show a composition bias toward low complexity; sequence EQSAQQAAEQS. The region spanning 67-177 is the MTTase N-terminal domain; sequence PKVGFVSLGC…VITAVSTHAP (111 aa). [4Fe-4S] cluster contacts are provided by cysteine 76, cysteine 112, cysteine 141, cysteine 216, cysteine 220, and cysteine 223. Residues 202 to 443 form the Radical SAM core domain; it reads LTPSHYAYLK…MAVQQQISEQ (242 aa). The TRAM domain occupies 446-519; that stretch reads QEKVGKTMTV…EYDLFASYDA (74 aa).

The protein belongs to the methylthiotransferase family. RimO subfamily. [4Fe-4S] cluster is required as a cofactor.

The protein localises to the cytoplasm. It carries out the reaction L-aspartate(89)-[ribosomal protein uS12]-hydrogen + (sulfur carrier)-SH + AH2 + 2 S-adenosyl-L-methionine = 3-methylsulfanyl-L-aspartate(89)-[ribosomal protein uS12]-hydrogen + (sulfur carrier)-H + 5'-deoxyadenosine + L-methionine + A + S-adenosyl-L-homocysteine + 2 H(+). Its function is as follows. Catalyzes the methylthiolation of an aspartic acid residue of ribosomal protein uS12. In Psychrobacter sp. (strain PRwf-1), this protein is Ribosomal protein uS12 methylthiotransferase RimO.